The primary structure comprises 446 residues: Sorting nexin-30 (446 aa).

The span at 1–18 (MSGSSTPKSLPTSGQQSL) shows a compositional bias: polar residues. The tract at residues 1-84 (MSGSSTPKSL…SSPASSSSLL (84 aa)) is disordered. A compositionally biased stretch (low complexity) spans 70-84 (TPADTSSPASSSSLL). Residues 98–219 (RDLFVTVDDP…VFLTAKDLNS (122 aa)) enclose the PX domain. Arg-141, Gln-143, Lys-171, and Arg-185 together coordinate a 1,2-diacyl-sn-glycero-3-phospho-(1D-myo-inositol-3-phosphate). Positions 243 to 446 (KLRNRPVEFA…PLLQDKQEPK (204 aa)) constitute a BAR domain.

Belongs to the sorting nexin family.

It is found in the early endosome membrane. Its function is as follows. Involved in the regulation of endocytosis and in several stages of intracellular trafficking. Together with snx4, involved in autophagosome assembly. The chain is Sorting nexin-30 (snx30) from Xenopus tropicalis (Western clawed frog).